The chain runs to 796 residues: Protein tyrosine phosphatase domain-containing protein 1 (796 aa).

The region spanning tyrosine 126 to cysteine 297 is the Tyrosine-protein phosphatase domain. Cysteine 234 serves as the catalytic Phosphocysteine intermediate. A phosphoserine mark is found at serine 435 and serine 437.

This sequence belongs to the protein-tyrosine phosphatase family. Non-receptor class PTPDC1 subfamily.

Functionally, may play roles in cilia formation and/or maintenance. This is Protein tyrosine phosphatase domain-containing protein 1 (PTPDC1) from Bos taurus (Bovine).